We begin with the raw amino-acid sequence, 243 residues long: Probable flavin-dependent thymidylate synthase (243 aa).

One can recognise a ThyX domain in the interval 21–239 (FEVDDFEESK…PNTYQDIPDV (219 aa)). FAD-binding positions include S80 and 103 to 105 (RHR). DUMP is bound by residues 100-103 (ELER), 113-115 (SQR), and R178. Residues 103–113 (RHRHLSFSVVS) carry the ThyX motif motif. 194 to 196 (NHR) lines the FAD pocket. R205 is a dUMP binding site. R205 serves as the catalytic Involved in ionization of N3 of dUMP, leading to its activation.

Belongs to the thymidylate synthase ThyX family. Homotetramer. FAD serves as cofactor.

It catalyses the reaction dUMP + (6R)-5,10-methylene-5,6,7,8-tetrahydrofolate + NADPH + H(+) = dTMP + (6S)-5,6,7,8-tetrahydrofolate + NADP(+). The protein operates within pyrimidine metabolism; dTTP biosynthesis. In terms of biological role, catalyzes the reductive methylation of 2'-deoxyuridine-5'-monophosphate (dUMP) to 2'-deoxythymidine-5'-monophosphate (dTMP) while utilizing 5,10-methylenetetrahydrofolate (mTHF) as the methyl donor, and NADPH and FADH(2) as the reductant. The sequence is that of Probable flavin-dependent thymidylate synthase (48) from Mycobacterium phage L5 (Mycobacteriophage L5).